Consider the following 200-residue polypeptide: NAD(P)H dehydrogenase (quinone) (200 aa).

Residues 4–191 (VLVLYYSSYG…DIARYQGKHV (188 aa)) form the Flavodoxin-like domain. Residues 10–15 (SSYGHV) and 79–81 (TRF) contribute to the FMN site. Tyrosine 12 contributes to the NAD(+) binding site. Tryptophan 99 is a binding site for substrate. Residues 114-120 (STGTQHG) and histidine 135 each bind FMN.

This sequence belongs to the WrbA family. It depends on FMN as a cofactor.

The enzyme catalyses a quinone + NADH + H(+) = a quinol + NAD(+). It catalyses the reaction a quinone + NADPH + H(+) = a quinol + NADP(+). The protein is NAD(P)H dehydrogenase (quinone) of Burkholderia cenocepacia (strain HI2424).